The primary structure comprises 490 residues: Proline--tRNA ligase (490 aa).

The protein belongs to the class-II aminoacyl-tRNA synthetase family. ProS type 3 subfamily. In terms of assembly, homodimer.

The protein resides in the cytoplasm. It carries out the reaction tRNA(Pro) + L-proline + ATP = L-prolyl-tRNA(Pro) + AMP + diphosphate. Catalyzes the attachment of proline to tRNA(Pro) in a two-step reaction: proline is first activated by ATP to form Pro-AMP and then transferred to the acceptor end of tRNA(Pro). The chain is Proline--tRNA ligase from Salinibacter ruber (strain DSM 13855 / M31).